Consider the following 37-residue polypeptide: Cytochrome b6-f complex subunit 5 (37 aa).

The chain crosses the membrane as a helical span at residues 5-25 (LLSGIVLGLMPVTLAGLFTTA).

The protein belongs to the PetG family. As to quaternary structure, the 4 large subunits of the cytochrome b6-f complex are cytochrome b6, subunit IV (17 kDa polypeptide, PetD), cytochrome f and the Rieske protein, while the 4 small subunits are PetG, PetL, PetM and PetN. The complex functions as a dimer.

It localises to the plastid. It is found in the chloroplast thylakoid membrane. Component of the cytochrome b6-f complex, which mediates electron transfer between photosystem II (PSII) and photosystem I (PSI), cyclic electron flow around PSI, and state transitions. PetG is required for either the stability or assembly of the cytochrome b6-f complex. The chain is Cytochrome b6-f complex subunit 5 from Ostreococcus tauri.